Consider the following 182-residue polypeptide: NADH-quinone oxidoreductase subunit I (182 aa).

2 consecutive 4Fe-4S ferredoxin-type domains span residues 52–82 and 92–121; these read LTRDPDGEERCVACNLCAVACPVGCISLQKA and EFFRINFSRCIFCGLCEEACPTTAIQLTPD. Residues cysteine 62, cysteine 65, cysteine 68, cysteine 72, cysteine 101, cysteine 104, cysteine 107, and cysteine 111 each coordinate [4Fe-4S] cluster.

Belongs to the complex I 23 kDa subunit family. As to quaternary structure, NDH-1 is composed of 13 different subunits. Subunits NuoA, H, J, K, L, M, N constitute the membrane sector of the complex. The cofactor is [4Fe-4S] cluster.

The protein resides in the cell inner membrane. It catalyses the reaction a quinone + NADH + 5 H(+)(in) = a quinol + NAD(+) + 4 H(+)(out). Functionally, NDH-1 shuttles electrons from NADH, via FMN and iron-sulfur (Fe-S) centers, to quinones in the respiratory chain. The immediate electron acceptor for the enzyme in this species is believed to be ubiquinone. Couples the redox reaction to proton translocation (for every two electrons transferred, four hydrogen ions are translocated across the cytoplasmic membrane), and thus conserves the redox energy in a proton gradient. This is NADH-quinone oxidoreductase subunit I from Pseudomonas entomophila (strain L48).